The sequence spans 694 residues: Lon-like protease BrxL (694 aa).

Belongs to the BrxL family.

Its function is as follows. BREX systems (bacteriophage exclusion) provide immunity against bacteriophage. Part of a type 1 BREX system which protects against dsDNA phage. This system allows phage adsorption but prevents phage DNA replication, without degradation of the phage DNA. Methylation of bacterial DNA by PglX guides self/non-self discrimination. When the brxA-brxB-brxC-pglX-pglZ-brxL genes are transformed into a susceptible E.coli strain (BW25113) they confer very high resistance to infection by bacteriophage VR7 and VpaE1, about 100-fold protection against lambda, T5 and T7 and no protection against RNA phage Qbeta, ssDNA phage M13 or dSDNA phage T4 and VR5. Glycosylated phage DNA is not susceptible to BREX. The BREX system does not confer resistance to lysogenic lambda phage, i.e. prophage that are integrated into the chromosomal DNA and then induced to form phage. Expression of this protein alone is toxic. This is Lon-like protease BrxL from Escherichia coli O9:H4 (strain HS).